Consider the following 87-residue polypeptide: Small ribosomal subunit protein uS15 (87 aa).

This sequence belongs to the universal ribosomal protein uS15 family. As to quaternary structure, part of the 30S ribosomal subunit. Forms a bridge to the 50S subunit in the 70S ribosome, contacting the 23S rRNA.

Its function is as follows. One of the primary rRNA binding proteins, it binds directly to 16S rRNA where it helps nucleate assembly of the platform of the 30S subunit by binding and bridging several RNA helices of the 16S rRNA. Forms an intersubunit bridge (bridge B4) with the 23S rRNA of the 50S subunit in the ribosome. This chain is Small ribosomal subunit protein uS15, found in Acetivibrio thermocellus (strain ATCC 27405 / DSM 1237 / JCM 9322 / NBRC 103400 / NCIMB 10682 / NRRL B-4536 / VPI 7372) (Clostridium thermocellum).